We begin with the raw amino-acid sequence, 148 residues long: MRCPFCHNEDTQVLDTRVSDEGDTIRRRRRCAKCDKRFTTYERVELALPAIVKKNGSRVEYSHDKLASSIKLALRKRSVSSDSVDESIARIEEKLLSFGEKEIPSERVGELVMRELKRLDKVAYIRFASVYRSFADIESFESALKELK.

Residues 3 to 34 fold into a zinc finger; that stretch reads CPFCHNEDTQVLDTRVSDEGDTIRRRRRCAKC. Residues 49–139 form the ATP-cone domain; the sequence is PAIVKKNGSR…VYRSFADIES (91 aa).

Belongs to the NrdR family. The cofactor is Zn(2+).

Negatively regulates transcription of bacterial ribonucleotide reductase nrd genes and operons by binding to NrdR-boxes. The chain is Transcriptional repressor NrdR from Polynucleobacter necessarius subsp. necessarius (strain STIR1).